We begin with the raw amino-acid sequence, 1349 residues long: Protein strawberry notch homolog 2 (1349 aa).

Disordered regions lie at residues 170-212 (YQSH…QHPD), 609-633 (STRR…PKAS), and 1319-1349 (PTET…FPNS). A compositionally biased stretch (acidic residues) spans 177-188 (EEEEGEEEEETE). Residues 609 to 631 (STRRRRDRGGGKRKRRPRGRGPK) show a composition bias toward basic residues.

This sequence belongs to the SBNO family. As to quaternary structure, interacts with TAL1; this interaction inhibits TAL1 occupancy of the DCSTAMP promoter, leading to the activation of the DCSTAMP promoter by the transcription factor MITF. As to expression, expressed in the spleen and bone marrow, and to a lesser extent in the kidney, liver, brain, skin, heart and muscle. Expressed predominantly in osteoclasts, and to a lesser extent in T-cells, B-cells and osteoblasts. Expressed in macrophages.

Its function is as follows. Acts as a transcriptional coregulator, that can have both coactivator and corepressor functions. Inhibits the DCSTAMP-repressive activity of TAL1, hence enhancing the access of the transcription factor MITF to the DC-STAMP promoter in osteoclast. Plays a role in bone homeostasis; required as a positive regulator in TNFSF11//RANKL-mediated osteoclast fusion via a DCSTAMP-dependent pathway. May also be required in the regulation of osteoblast differentiation. Involved in the transcriptional corepression of NF-kappaB in macrophages. Plays a role as a regulator in the pro-inflammatory cascade. In Mus musculus (Mouse), this protein is Protein strawberry notch homolog 2 (Sbno2).